The sequence spans 872 residues: DNA mismatch repair protein MutS (872 aa).

623–630 is a binding site for ATP; the sequence is GPNMAGKS.

It belongs to the DNA mismatch repair MutS family.

In terms of biological role, this protein is involved in the repair of mismatches in DNA. It is possible that it carries out the mismatch recognition step. This protein has a weak ATPase activity. The polypeptide is DNA mismatch repair protein MutS (Trichlorobacter lovleyi (strain ATCC BAA-1151 / DSM 17278 / SZ) (Geobacter lovleyi)).